A 361-amino-acid polypeptide reads, in one-letter code: Glucose 1-dehydrogenase (361 aa).

Position 41 (Cys41) interacts with Zn(2+). Residue Thr43 coordinates substrate. Residues His68 and Glu69 each contribute to the Zn(2+) site. Substrate contacts are provided by Glu119, Glu156, and Asn160. Glu156 is a binding site for Zn(2+). Residues 216–218, 275–277, 304–306, and Lys349 each bind NADP(+); these read NRH, FGT, and SVD. Residue Asp306 participates in substrate binding.

It belongs to the zinc-containing alcohol dehydrogenase family. Glucose 1-dehydrogenase subfamily. Homotetramer. Zn(2+) is required as a cofactor.

It catalyses the reaction D-glucose + NAD(+) = D-glucono-1,5-lactone + NADH + H(+). The enzyme catalyses D-glucose + NADP(+) = D-glucono-1,5-lactone + NADPH + H(+). It carries out the reaction D-galactose + NAD(+) = D-galactono-1,4-lactone + NADH + H(+). The catalysed reaction is D-galactose + NADP(+) = D-galactono-1,5-lactone + NADPH + H(+). Functionally, catalyzes the NAD(P)(+)-dependent oxidation of D-glucose to D-gluconate via gluconolactone. Is also significantly active with galactose as substrate, but not with mannose or glucose 6-phosphate. Can utilize both NAD(+) and NADP(+) as electron acceptor, with a marked preference for NADP(+). Physiologically, may be involved in the degradation of both glucose and galactose through a non-phosphorylative variant of the Entner-Doudoroff pathway. The polypeptide is Glucose 1-dehydrogenase (Thermoplasma acidophilum (strain ATCC 25905 / DSM 1728 / JCM 9062 / NBRC 15155 / AMRC-C165)).